Reading from the N-terminus, the 334-residue chain is Anthranilate phosphoribosyltransferase (334 aa).

5-phospho-alpha-D-ribose 1-diphosphate is bound by residues G79, 82-83, S87, 89-92, 107-115, and S119; these read GD, NIST, and KHGNRSISS. G79 provides a ligand contact to anthranilate. S91 serves as a coordination point for Mg(2+). N110 serves as a coordination point for anthranilate. R165 contacts anthranilate. 2 residues coordinate Mg(2+): D224 and E225.

The protein belongs to the anthranilate phosphoribosyltransferase family. In terms of assembly, homodimer. Mg(2+) is required as a cofactor.

The catalysed reaction is N-(5-phospho-beta-D-ribosyl)anthranilate + diphosphate = 5-phospho-alpha-D-ribose 1-diphosphate + anthranilate. The protein operates within amino-acid biosynthesis; L-tryptophan biosynthesis; L-tryptophan from chorismate: step 2/5. Catalyzes the transfer of the phosphoribosyl group of 5-phosphorylribose-1-pyrophosphate (PRPP) to anthranilate to yield N-(5'-phosphoribosyl)-anthranilate (PRA). The sequence is that of Anthranilate phosphoribosyltransferase from Streptococcus pneumoniae (strain ATCC 700669 / Spain 23F-1).